The following is a 562-amino-acid chain: Nucleoprotein (562 aa).

Residues 54-237 (LRKTKRTDGD…ITKDESAINI (184 aa)) form a binding site for the cap structure m7GTP region. Positions 381 and 383 each coordinate Mn(2+). Zn(2+) is bound by residues Glu391, Cys498, His501, and Cys523. Asp527 contributes to the Mn(2+) binding site.

This sequence belongs to the arenaviridae nucleocapsid protein family. In terms of assembly, homomultimerizes to form the nucleocapsid. Binds to viral genomic RNA. Interacts with glycoprotein G2. Interacts with protein Z; this interaction probably directs the encapsidated genome to budding sites. Interacts with protein L; this interaction does not interfere with Z-L interaction. Interacts with host IKBKE (via Protein kinase domain); the interaction inhibits IKBKE kinase activity.

It localises to the virion. The protein localises to the host cytoplasm. In terms of biological role, encapsidates the genome, protecting it from nucleases. The encapsidated genomic RNA is termed the nucleocapsid (NC). Serves as template for viral transcription and replication. The increased presence of protein N in host cell does not seem to trigger the switch from transcription to replication as observed in other negative strain RNA viruses. Through the interaction with host IKBKE, strongly inhibits the phosphorylation and nuclear translocation of host IRF3, a protein involved in interferon activation pathway, leading to the inhibition of interferon-beta and IRF3-dependent promoters activation. Also encodes a functional 3'-5' exoribonuclease that degrades preferentially dsRNA substrates and thereby participates in the suppression of interferon induction. This chain is Nucleoprotein, found in Homo sapiens (Human).